A 133-amino-acid polypeptide reads, in one-letter code: Mitochondrial import inner membrane translocase subunit TIM17-3 (133 aa).

Helical transmembrane passes span 15–35, 63–83, 90–105, and 115–128; these read IVNAIGYAFGAGAVGGSVYHF, GGTFAVFGGLLSTFDYALVRI, WNSIVAGAATGGVLSI, and SAVMFGFFLAVLNP.

It belongs to the Tim17/Tim22/Tim23 family. As to quaternary structure, component of the TIM17:23 complex at least composed of TIM23, TIM17 and TIM50. The complex interacts with the TIM44 component of the PAM complex. As to expression, expressed in cotyledons, roots, flowers and leaves.

Its subcellular location is the mitochondrion inner membrane. Essential component of the TIM17:23 complex, a complex that mediates the translocation of transit peptide-containing proteins across the mitochondrial inner membrane. Links the inner and outer membranes. The chain is Mitochondrial import inner membrane translocase subunit TIM17-3 (TIM17-3) from Arabidopsis thaliana (Mouse-ear cress).